The chain runs to 209 residues: Imidazole glycerol phosphate synthase subunit HisH (209 aa).

The 205-residue stretch at 1 to 205 (MIAIIDYGMG…KGVVETWKSS (205 aa)) folds into the Glutamine amidotransferase type-1 domain. The active-site Nucleophile is cysteine 79. Residues histidine 180 and glutamate 182 contribute to the active site.

Heterodimer of HisH and HisF.

Its subcellular location is the cytoplasm. It carries out the reaction 5-[(5-phospho-1-deoxy-D-ribulos-1-ylimino)methylamino]-1-(5-phospho-beta-D-ribosyl)imidazole-4-carboxamide + L-glutamine = D-erythro-1-(imidazol-4-yl)glycerol 3-phosphate + 5-amino-1-(5-phospho-beta-D-ribosyl)imidazole-4-carboxamide + L-glutamate + H(+). The catalysed reaction is L-glutamine + H2O = L-glutamate + NH4(+). It functions in the pathway amino-acid biosynthesis; L-histidine biosynthesis; L-histidine from 5-phospho-alpha-D-ribose 1-diphosphate: step 5/9. IGPS catalyzes the conversion of PRFAR and glutamine to IGP, AICAR and glutamate. The HisH subunit catalyzes the hydrolysis of glutamine to glutamate and ammonia as part of the synthesis of IGP and AICAR. The resulting ammonia molecule is channeled to the active site of HisF. This Bacillus thuringiensis (strain Al Hakam) protein is Imidazole glycerol phosphate synthase subunit HisH.